The following is a 197-amino-acid chain: MLHISRSLTKLLGELKKLPSVGDKTALRLAFHLLKSPENLSALAKSLLEVRDGVRFCSTCFGITESDPCHLCTTPRDDASICVVEEPQDILAMERSQAFKGRYHVLHGALSPLNGVTPGQLRIAELLQRLENGSVKEVLLATNFTVEGEATALYLTRLIKPLSIKVTRLAHGIPIGSDLEYVDAATVQRAVEGRSEL.

Residues 57–72 (CSTCFGITESDPCHLC) form a C4-type zinc finger. Residues 79 to 174 (ASICVVEEPQ…KVTRLAHGIP (96 aa)) enclose the Toprim domain.

Belongs to the RecR family.

Functionally, may play a role in DNA repair. It seems to be involved in an RecBC-independent recombinational process of DNA repair. It may act with RecF and RecO. The sequence is that of Recombination protein RecR from Geotalea uraniireducens (strain Rf4) (Geobacter uraniireducens).